The chain runs to 155 residues: Pathogenesis-related protein STH-2 (155 aa).

Belongs to the BetVI family.

The chain is Pathogenesis-related protein STH-2 (STH-2) from Solanum tuberosum (Potato).